Consider the following 299-residue polypeptide: Virginiamycin B lyase (299 aa).

His-229 provides a ligand contact to substrate. Glu-269 serves as a coordination point for Mg(2+). Catalysis depends on His-271, which acts as the Proton acceptor. Glu-286 contributes to the Mg(2+) binding site.

This sequence belongs to the Vgb family. Monomer. Mg(2+) serves as cofactor.

Functionally, inactivates the type B streptogramin antibiotics by linearizing the lactone ring at the ester linkage, generating a free phenylglycine carboxylate and converting the threonyl moiety into 2-amino-butenoic acid. The polypeptide is Virginiamycin B lyase (vgb) (Bordetella pertussis (strain Tohama I / ATCC BAA-589 / NCTC 13251)).